The chain runs to 306 residues: Polyisoprenyl-teichoic acid--peptidoglycan teichoic acid transferase TagU (306 aa).

Topologically, residues 1-11 are cytoplasmic; it reads MRNERRKKKKT. The chain crosses the membrane as a helical; Signal-anchor for type II membrane protein span at residues 12–32; sequence LLLTILTIIGLLVLGTGGYAY. Residues 33–306 are Extracellular-facing; it reads YLWHKAASTV…TKELKESLEK (274 aa).

This sequence belongs to the LytR/CpsA/Psr (LCP) family. In terms of assembly, interacts with MreB. Interacts with FloT.

The protein resides in the cell membrane. Its subcellular location is the membrane raft. It functions in the pathway cell wall biogenesis. Its function is as follows. May catalyze the final step in cell wall teichoic acid biosynthesis, the transfer of the anionic cell wall polymers (APs) from their lipid-linked precursor to the cell wall peptidoglycan (PG). The chain is Polyisoprenyl-teichoic acid--peptidoglycan teichoic acid transferase TagU from Bacillus subtilis (strain 168).